We begin with the raw amino-acid sequence, 156 residues long: tRNA (cytidine(34)-2'-O)-methyltransferase (156 aa).

Residues glycine 100, isoleucine 122, and serine 130 each coordinate S-adenosyl-L-methionine.

The protein belongs to the class IV-like SAM-binding methyltransferase superfamily. RNA methyltransferase TrmH family. TrmL subfamily. As to quaternary structure, homodimer.

It localises to the cytoplasm. The catalysed reaction is cytidine(34) in tRNA + S-adenosyl-L-methionine = 2'-O-methylcytidine(34) in tRNA + S-adenosyl-L-homocysteine + H(+). It carries out the reaction 5-carboxymethylaminomethyluridine(34) in tRNA(Leu) + S-adenosyl-L-methionine = 5-carboxymethylaminomethyl-2'-O-methyluridine(34) in tRNA(Leu) + S-adenosyl-L-homocysteine + H(+). Functionally, methylates the ribose at the nucleotide 34 wobble position in the two leucyl isoacceptors tRNA(Leu)(CmAA) and tRNA(Leu)(cmnm5UmAA). Catalyzes the methyl transfer from S-adenosyl-L-methionine to the 2'-OH of the wobble nucleotide. The chain is tRNA (cytidine(34)-2'-O)-methyltransferase from Aeromonas hydrophila subsp. hydrophila (strain ATCC 7966 / DSM 30187 / BCRC 13018 / CCUG 14551 / JCM 1027 / KCTC 2358 / NCIMB 9240 / NCTC 8049).